Reading from the N-terminus, the 557-residue chain is Potassium-transporting ATPase potassium-binding subunit (557 aa).

12 consecutive transmembrane segments (helical) span residues 5–25 (GFLL…PLGS), 63–83 (LCAI…MLLG), 132–152 (GLTV…FALI), 170–190 (LLRI…LFFI), 253–273 (FVQM…FGEV), 283–303 (LLWA…WAEV), 329–349 (VLVS…AVIA), 356–376 (ALGG…FGGV), 379–399 (GLYG…LMIG), 416–436 (LTAL…ALAM), 484–504 (LLAF…MAIA), and 526–546 (LFVG…FIPA).

The protein belongs to the KdpA family. In terms of assembly, the system is composed of three essential subunits: KdpA, KdpB and KdpC.

The protein resides in the cell inner membrane. Functionally, part of the high-affinity ATP-driven potassium transport (or Kdp) system, which catalyzes the hydrolysis of ATP coupled with the electrogenic transport of potassium into the cytoplasm. This subunit binds the periplasmic potassium ions and delivers the ions to the membrane domain of KdpB through an intramembrane tunnel. This is Potassium-transporting ATPase potassium-binding subunit from Escherichia coli O139:H28 (strain E24377A / ETEC).